The following is a 344-amino-acid chain: AP2/ERF and B3 domain-containing transcription factor RAV1 (344 aa).

Residues 1-15 are compositionally biased toward low complexity; that stretch reads MESSSVDESTTSTGS. The disordered stretch occupies residues 1 to 22; sequence MESSSVDESTTSTGSICETPAI. Residues 61 to 116 constitute a DNA-binding region (AP2/ERF); that stretch reads KYKGVVPQPNGRWGAQIYEKHQRVWLGTFNEEDEAARAYDVAVHRFRRRDAVTNFK. The segment at 148 to 169 is disordered; it reads ELEQSKRRRNGNGNMTRTLLTS. Residues 188–292 constitute a DNA-binding region (TF-B3); sequence FEKAVTPSDV…QLYIGWKSRS (105 aa).

The protein belongs to the AP2/ERF transcription factor family. RAV subfamily. In terms of assembly, monomer. Expressed in all tissues examined: Roots, rosette leaves, cauline leaves, inflorescence stems, flowers and siliques. Highest expression in roots and rosette leaves. Very low expression in flowers.

It localises to the nucleus. Its function is as follows. Binds specifically to bipartite recognition sequences composed of two unrelated motifs, 5'-CAACA-3' and 5'-CACCTG-3'. May function as negative regulator of plant growth and development. In Arabidopsis thaliana (Mouse-ear cress), this protein is AP2/ERF and B3 domain-containing transcription factor RAV1 (RAV1).